The sequence spans 105 residues: Synaptic plasticity regulator PANTS (105 aa).

The protein belongs to the UPF0545 family. In terms of assembly, interacts with RTN4 isoform A/Nogo-A; the interaction results in enhanced RTN4-mediated inhibition of AMPA receptor clustering. Also interacts with NCAM1, RANBP2 and CCT8. Post-translationally, rapidly degraded by proteolysis following neuronal stimulation, resulting in increased AMPA receptor clustering.

The protein resides in the synapse. The protein localises to the synaptic cleft. Its function is as follows. Negatively regulates long-term potentiation and modulates adult synaptic plasticity. Stabilizes the interaction of RTN4 isoform A/Nogo-A with its receptors, inhibiting clustering of postsynaptic AMPA receptors at synaptic sites. Upon neuronal stimulation, degraded at synapses, reducing RTN4 signaling and allowing AMPA receptor clustering at individual synapses. This is Synaptic plasticity regulator PANTS (C22orf39) from Homo sapiens (Human).